The chain runs to 363 residues: Pyrimidine monooxygenase RutA (363 aa).

FMN-binding positions include 49-50 (IK), asparagine 115, glutamate 124, 140-141 (RY), and serine 190.

It belongs to the NtaA/SnaA/DszA monooxygenase family. RutA subfamily.

It carries out the reaction uracil + FMNH2 + NADH + O2 = (Z)-3-ureidoacrylate + FMN + NAD(+) + H2O + H(+). The enzyme catalyses thymine + FMNH2 + NADH + O2 = (Z)-2-methylureidoacrylate + FMN + NAD(+) + H2O + H(+). In terms of biological role, catalyzes the pyrimidine ring opening between N-3 and C-4 by an unusual flavin hydroperoxide-catalyzed mechanism, adding oxygen atoms in the process to yield ureidoacrylate peracid, that immediately reacts with FMN forming ureidoacrylate and FMN-N(5)-oxide. The FMN-N(5)-oxide reacts spontaneously with NADH to produce FMN. Requires the flavin reductase RutF to regenerate FMN in vivo. The sequence is that of Pyrimidine monooxygenase RutA from Escherichia coli O103:H2 (strain 12009 / EHEC).